The sequence spans 182 residues: Fatty-acid and retinol-binding protein 2 (182 aa).

Residues 1–17 (MIRAFLVVALASVAVFS) form the signal peptide. Coiled coils occupy residues 46 to 73 (LKAI…EEEF) and 131 to 152 (TLDS…LSDD).

The protein belongs to the fatty-acid and retinol-binding protein (FARBP) family.

It localises to the secreted. Probably binds lipids. The polypeptide is Fatty-acid and retinol-binding protein 2 (far-2) (Caenorhabditis elegans).